Here is a 316-residue protein sequence, read N- to C-terminus: Pantothenate kinase (316 aa).

95–102 contacts ATP; that stretch reads GSVAVGKS.

This sequence belongs to the prokaryotic pantothenate kinase family.

Its subcellular location is the cytoplasm. It carries out the reaction (R)-pantothenate + ATP = (R)-4'-phosphopantothenate + ADP + H(+). It functions in the pathway cofactor biosynthesis; coenzyme A biosynthesis; CoA from (R)-pantothenate: step 1/5. The chain is Pantothenate kinase from Shewanella woodyi (strain ATCC 51908 / MS32).